The sequence spans 170 residues: MNQMQEIIIDKVVVNIGVGQAGDRLTKAAKVLEMLTGHKPTQTLAKKSVRDFNIRKRLPIGVKVTLRKDDAVNFLNKALYVKDYKIPDYSFDKHGNAYFGISDYTDFKGMKYDPDIGIFGMDVAIVLKRRGGYRIEKRKIGKKTIPSSIRIKKDEAVEFLEKNFKVSVVR.

Belongs to the universal ribosomal protein uL5 family. In terms of assembly, part of the 50S ribosomal subunit; contacts the 5S rRNA and probably tRNA. Forms a bridge to the 30S subunit in the 70S ribosome.

Functionally, this is one of the proteins that bind and probably mediate the attachment of the 5S RNA into the large ribosomal subunit, where it forms part of the central protuberance. In the 70S ribosome it contacts protein S13 of the 30S subunit (bridge B1b), connecting the 2 subunits; this bridge is implicated in subunit movement. May contact the P site tRNA; the 5S rRNA and some of its associated proteins might help stabilize positioning of ribosome-bound tRNAs. In Thermoplasma volcanium (strain ATCC 51530 / DSM 4299 / JCM 9571 / NBRC 15438 / GSS1), this protein is Large ribosomal subunit protein uL5.